The primary structure comprises 474 residues: tRNA-2-methylthio-N(6)-dimethylallyladenosine synthase (474 aa).

The MTTase N-terminal domain occupies glutamine 3–glycine 120. 6 residues coordinate [4Fe-4S] cluster: cysteine 12, cysteine 49, cysteine 83, cysteine 157, cysteine 161, and cysteine 164. One can recognise a Radical SAM core domain in the interval arginine 143–glutamine 375. Positions arginine 378–arginine 441 constitute a TRAM domain.

It belongs to the methylthiotransferase family. MiaB subfamily. Monomer. The cofactor is [4Fe-4S] cluster.

It localises to the cytoplasm. The catalysed reaction is N(6)-dimethylallyladenosine(37) in tRNA + (sulfur carrier)-SH + AH2 + 2 S-adenosyl-L-methionine = 2-methylsulfanyl-N(6)-dimethylallyladenosine(37) in tRNA + (sulfur carrier)-H + 5'-deoxyadenosine + L-methionine + A + S-adenosyl-L-homocysteine + 2 H(+). Its function is as follows. Catalyzes the methylthiolation of N6-(dimethylallyl)adenosine (i(6)A), leading to the formation of 2-methylthio-N6-(dimethylallyl)adenosine (ms(2)i(6)A) at position 37 in tRNAs that read codons beginning with uridine. The protein is tRNA-2-methylthio-N(6)-dimethylallyladenosine synthase of Haemophilus influenzae (strain PittGG).